The sequence spans 67 residues: Protein AaeX (67 aa).

The next 2 helical transmembrane spans lie at 3–23 and 43–63; these read VLPVFVMFGLSFPPVFIELII and LVWHPALFNTALYCCVFYLVS.

The protein belongs to the AaeX family.

It localises to the cell membrane. This chain is Protein AaeX, found in Pantoea vagans (strain C9-1) (Pantoea agglomerans (strain C9-1)).